The chain runs to 188 residues: Elongation factor P (188 aa).

Belongs to the elongation factor P family.

It is found in the cytoplasm. It functions in the pathway protein biosynthesis; polypeptide chain elongation. Involved in peptide bond synthesis. Stimulates efficient translation and peptide-bond synthesis on native or reconstituted 70S ribosomes in vitro. Probably functions indirectly by altering the affinity of the ribosome for aminoacyl-tRNA, thus increasing their reactivity as acceptors for peptidyl transferase. The polypeptide is Elongation factor P (Streptomyces avermitilis (strain ATCC 31267 / DSM 46492 / JCM 5070 / NBRC 14893 / NCIMB 12804 / NRRL 8165 / MA-4680)).